Consider the following 565-residue polypeptide: Acyl-CoA ligase easD (565 aa).

ATP is bound by residues 213 to 221 (TSGTSGKQK), 354 to 359 (HAYGLT), aspartate 438, arginine 457, and lysine 555. The interval 284-354 (DMQLMLKTIE…KLRPTWKINH (71 aa)) is SBD1. Residues 355-417 (AYGLTETGVV…FNSPSCFLGY (63 aa)) form an SBD2 region.

It belongs to the ATP-dependent AMP-binding enzyme family.

The protein operates within antibiotic biosynthesis. In terms of biological role, acyl-CoA ligase; part of the gene cluster that mediates the biosynthesis of emericellamides, secondary metabolites acting as antibiotics. The biosynthesis of emericellamides initiates from the highly reducing polyketide synthase easB which catalyzes the formation of the linear polyketide chain. EasB produces several polyketides that can be further processed by the downstream enzymes. The polyketides are released from easB as linear polyketide carboxylic acids, which are converted to CoA thioesters by the acyl-CoA ligase easD. The substrates are then loaded onto the acyltransferase easC, which shuttles them to the first thiolation (T) domain of the nonribosomal peptide synthetase easA. EasA then performs condensation of the polyketides with one glycine, two alanine, one valine and one leucine residues. A last step of cyclization leads to the production of emericellamides. This is Acyl-CoA ligase easD from Emericella nidulans (strain FGSC A4 / ATCC 38163 / CBS 112.46 / NRRL 194 / M139) (Aspergillus nidulans).